The sequence spans 473 residues: MARTLYDKIWDEHVVHTEEDGTAILYIDRHLVHEVTSPQAFEGLREAGRKLWRISSVVATADHNTPTTGWERGYEGIADPTSKEQVTTLDKNIAEFGAAAFFPFLSKRQGIVHVIGPESGATLPGMTVVCGDSHTSTHGAFGALAHGIGTSEVEHVMATQTLLGKKAKNMLVKVEGKLPFGCTAKDIVLAIIGKIGTAGGTGYTIEFAGSAIRDLSMEGRMTVCNMAIEAGARAGLVAVDEKTIGYIKGRPLAPTGVEWDQAVAYWRTLQSDPDAAFDAVVELDATQIQPQVTWGTSPEMVVDINGRVPDPDKEKDASKRSAIERALVYMGLEPNKAMNDIFIDKVFIGSCTNSRIEDMREAAAVVKKLGQKVAKNVKLAMVVPGSGVVKEQAEREGLDVIFKAAGFEWREPGCSMCLAMNADRLEPGERCASTSNRNFEGRQGAGGRTHLVSPAMAAAAAVHGHFVDVRTFA.

Residues cysteine 351, cysteine 414, and cysteine 417 each coordinate [4Fe-4S] cluster.

The protein belongs to the aconitase/IPM isomerase family. LeuC type 1 subfamily. As to quaternary structure, heterodimer of LeuC and LeuD. It depends on [4Fe-4S] cluster as a cofactor.

The enzyme catalyses (2R,3S)-3-isopropylmalate = (2S)-2-isopropylmalate. It functions in the pathway amino-acid biosynthesis; L-leucine biosynthesis; L-leucine from 3-methyl-2-oxobutanoate: step 2/4. In terms of biological role, catalyzes the isomerization between 2-isopropylmalate and 3-isopropylmalate, via the formation of 2-isopropylmaleate. This chain is 3-isopropylmalate dehydratase large subunit, found in Variovorax paradoxus (strain S110).